A 202-amino-acid polypeptide reads, in one-letter code: Na(+)-translocating NADH-quinone reductase subunit E (202 aa).

The next 6 helical transmembrane spans lie at 11–31, 35–55, 81–101, 114–134, 144–164, and 180–200; these read AIFVENMALAFFLGMCTFLAI, IEAATGLGIAVVVVLTVTVPV, FLGLLTYIGVIAAIVQIMEMV, GVFLPLITVNCAILGASLFMV, LVYGFGAGVGWALAIIALAGI, and LGITFITVGLMSLGFMSFSGI.

Belongs to the NqrDE/RnfAE family. Composed of six subunits; NqrA, NqrB, NqrC, NqrD, NqrE and NqrF.

It localises to the cell inner membrane. It carries out the reaction a ubiquinone + n Na(+)(in) + NADH + H(+) = a ubiquinol + n Na(+)(out) + NAD(+). In terms of biological role, NQR complex catalyzes the reduction of ubiquinone-1 to ubiquinol by two successive reactions, coupled with the transport of Na(+) ions from the cytoplasm to the periplasm. NqrA to NqrE are probably involved in the second step, the conversion of ubisemiquinone to ubiquinol. This chain is Na(+)-translocating NADH-quinone reductase subunit E, found in Marinobacter nauticus (strain ATCC 700491 / DSM 11845 / VT8) (Marinobacter aquaeolei).